The following is a 447-amino-acid chain: Nisin biosynthesis sensor protein NisK (447 aa).

2 consecutive transmembrane segments (helical) span residues valine 15–phenylalanine 35 and threonine 147–isoleucine 167. In terms of domain architecture, Histidine kinase spans alanine 235–lysine 447. Residue histidine 238 is modified to Phosphohistidine; by autocatalysis.

The protein localises to the cell membrane. The catalysed reaction is ATP + protein L-histidine = ADP + protein N-phospho-L-histidine.. Its function is as follows. Member of the two-component regulatory system NisK/NisR involved in the regulation of the biosynthesis of lantibiotic nisin. NisK may function as a membrane-associated protein kinase that phosphorylates NisR in response to environmental signals. In Lactococcus lactis subsp. lactis (Streptococcus lactis), this protein is Nisin biosynthesis sensor protein NisK (nisK).